The primary structure comprises 180 residues: Endoribonuclease YbeY (180 aa).

Zn(2+) contacts are provided by H118, H122, and H128.

Belongs to the endoribonuclease YbeY family. Zn(2+) is required as a cofactor.

Its subcellular location is the cytoplasm. Single strand-specific metallo-endoribonuclease involved in late-stage 70S ribosome quality control and in maturation of the 3' terminus of the 16S rRNA. In Rhodococcus erythropolis (strain PR4 / NBRC 100887), this protein is Endoribonuclease YbeY.